Here is a 410-residue protein sequence, read N- to C-terminus: Calsequestrin-2 (410 aa).

A signal peptide spans 1–19 (MKRTHLFIAGLYLLASCRA). The interval 221–242 (MDEPIAIPDKPYTEEELVEFVK) is calcium regulated hydrophobic site. Position 282 is a phosphotyrosine (Tyr282). Asn335 and Asn395 each carry an N-linked (GlcNAc...) asparagine glycan. Positions 364 to 410 (DVLSGKINTEDDDNEEGDDGDDDEDDDDDDGNNSDEESNDDSDDDDE) are disordered. Residues 373–410 (EDDDNEEGDDGDDDEDDDDDDGNNSDEESNDDSDDDDE) are compositionally biased toward acidic residues. Ser397, Ser401, and Ser405 each carry phosphoserine; by CK2.

The protein belongs to the calsequestrin family. In terms of assembly, interacts with ASPH. Monomer, homodimer and homooligomer. Mostly monomeric in the absence of calcium. Forms higher oligomers in a calcium-dependent manner. Dimers associate to form tetramers, that then form linear homomer chains. Interacts with TRDN. In terms of processing, phosphorylation in the C-terminus, probably by CK2, moderately increases calcium buffering capacity. N-glycosylated. As to expression, detected in heart muscle (at protein level).

The protein resides in the sarcoplasmic reticulum lumen. Calsequestrin is a high-capacity, moderate affinity, calcium-binding protein and thus acts as an internal calcium store in muscle. Calcium ions are bound by clusters of acidic residues at the protein surface, especially at the interface between subunits. Can bind around 60 Ca(2+) ions. Regulates the release of lumenal Ca(2+) via the calcium release channel RYR2; this plays an important role in triggering muscle contraction. Plays a role in excitation-contraction coupling in the heart and in regulating the rate of heart beats. The chain is Calsequestrin-2 (CASQ2) from Canis lupus familiaris (Dog).